The primary structure comprises 196 residues: Pyridoxal 5'-phosphate synthase subunit PdxT (196 aa).

Residue 47 to 49 participates in L-glutamine binding; the sequence is GES. Cysteine 79 (nucleophile) is an active-site residue. L-glutamine is bound by residues arginine 106 and 134 to 135; that span reads IR. Active-site charge relay system residues include histidine 170 and glutamate 172.

It belongs to the glutaminase PdxT/SNO family. As to quaternary structure, in the presence of PdxS, forms a dodecamer of heterodimers. Only shows activity in the heterodimer.

The enzyme catalyses aldehydo-D-ribose 5-phosphate + D-glyceraldehyde 3-phosphate + L-glutamine = pyridoxal 5'-phosphate + L-glutamate + phosphate + 3 H2O + H(+). The catalysed reaction is L-glutamine + H2O = L-glutamate + NH4(+). The protein operates within cofactor biosynthesis; pyridoxal 5'-phosphate biosynthesis. Functionally, catalyzes the hydrolysis of glutamine to glutamate and ammonia as part of the biosynthesis of pyridoxal 5'-phosphate. The resulting ammonia molecule is channeled to the active site of PdxS. This Bacillus cytotoxicus (strain DSM 22905 / CIP 110041 / 391-98 / NVH 391-98) protein is Pyridoxal 5'-phosphate synthase subunit PdxT.